A 637-amino-acid polypeptide reads, in one-letter code: Threonine--tRNA ligase (637 aa).

The TGS domain maps to 1 to 65; sequence MIAIQLPDGS…EADEALSIIT (65 aa). A catalytic region spans residues 246 to 537; that stretch reads DHRKLGRELD…LIEEHAGALP (292 aa). Zn(2+)-binding residues include cysteine 337, histidine 388, and histidine 514.

The protein belongs to the class-II aminoacyl-tRNA synthetase family. In terms of assembly, homodimer. Zn(2+) is required as a cofactor.

The protein resides in the cytoplasm. The catalysed reaction is tRNA(Thr) + L-threonine + ATP = L-threonyl-tRNA(Thr) + AMP + diphosphate + H(+). Catalyzes the attachment of threonine to tRNA(Thr) in a two-step reaction: L-threonine is first activated by ATP to form Thr-AMP and then transferred to the acceptor end of tRNA(Thr). Also edits incorrectly charged L-seryl-tRNA(Thr). The chain is Threonine--tRNA ligase from Leptothrix cholodnii (strain ATCC 51168 / LMG 8142 / SP-6) (Leptothrix discophora (strain SP-6)).